Consider the following 195-residue polypeptide: PBAN-type neuropeptides (195 aa).

The first 33 residues, 1–33, serve as a signal peptide directing secretion; sequence MIGFAVFSSFNRFTTIFVCVLLCVVYLLSYASG. Residues 34 to 63 constitute a propeptide that is removed on maturation; that stretch reads EYDGRDSSSGSNNDRAPSNEFGSCTDGKCI. The residue at position 80 (L80) is a Leucine amide. The propeptide occupies 86-117; that stretch reads ADRKPEINSDIEAFANAFEEPHWAIVTIPETE. At Q120 the chain carries Pyrrolidone carboxylic acid. Position 128 is a leucine amide (L128). The propeptide occupies 131 to 153; it reads ESGEDYFSYGFPKDQEELYTEEQ. 2 positions are modified to leucine amide: L163 and L175. A propeptide spanning residues 178 to 195 is cleaved from the precursor; that stretch reads QLHNIVDKPRQNFNDPRF.

This sequence belongs to the pyrokinin family.

Its subcellular location is the secreted. Functionally, a hormone that controls sex pheromone production in females and pheromone responsiveness in male. Also mediates visceral muscle contractile activity (myotropic activity). This chain is PBAN-type neuropeptides, found in Apis mellifera (Honeybee).